The sequence spans 294 residues: Large ribosomal subunit protein uL4m (294 aa).

Residues 120 to 139 are disordered; sequence VRGGGRKPWQQKGSGRARHG. Arginine 147 is modified (omega-N-methylarginine).

It belongs to the universal ribosomal protein uL4 family. Component of the mitochondrial ribosome large subunit (39S) which comprises a 16S rRNA and about 50 distinct proteins. Interacts with MIEF1 upstream open reading frame protein.

Its subcellular location is the mitochondrion. The chain is Large ribosomal subunit protein uL4m (MRPL4) from Bos taurus (Bovine).